The sequence spans 309 residues: Ribonuclease Z (309 aa).

7 residues coordinate Zn(2+): histidine 63, histidine 65, aspartate 67, histidine 68, histidine 145, aspartate 216, and histidine 274. Aspartate 67 acts as the Proton acceptor in catalysis.

This sequence belongs to the RNase Z family. As to quaternary structure, homodimer. Zn(2+) serves as cofactor.

The enzyme catalyses Endonucleolytic cleavage of RNA, removing extra 3' nucleotides from tRNA precursor, generating 3' termini of tRNAs. A 3'-hydroxy group is left at the tRNA terminus and a 5'-phosphoryl group is left at the trailer molecule.. Its function is as follows. Zinc phosphodiesterase, which displays some tRNA 3'-processing endonuclease activity. Probably involved in tRNA maturation, by removing a 3'-trailer from precursor tRNA. The protein is Ribonuclease Z of Streptococcus sanguinis (strain SK36).